A 271-amino-acid polypeptide reads, in one-letter code: Indole-3-glycerol phosphate synthase (271 aa).

The protein belongs to the TrpC family.

It catalyses the reaction 1-(2-carboxyphenylamino)-1-deoxy-D-ribulose 5-phosphate + H(+) = (1S,2R)-1-C-(indol-3-yl)glycerol 3-phosphate + CO2 + H2O. The protein operates within amino-acid biosynthesis; L-tryptophan biosynthesis; L-tryptophan from chorismate: step 4/5. The polypeptide is Indole-3-glycerol phosphate synthase (Haloarcula marismortui (strain ATCC 43049 / DSM 3752 / JCM 8966 / VKM B-1809) (Halobacterium marismortui)).